A 69-amino-acid chain; its full sequence is UPF0337 protein ECA0631 (69 aa).

Belongs to the UPF0337 (CsbD) family.

The protein is UPF0337 protein ECA0631 of Pectobacterium atrosepticum (strain SCRI 1043 / ATCC BAA-672) (Erwinia carotovora subsp. atroseptica).